Reading from the N-terminus, the 74-residue chain is MLVFYAPLFVSIFSNTVMGATIDKPIPKPILREAIEKIAVNKRADSRYCKEEKCPPGKHCPKVPIVCVRGPCCF.

The signal sequence occupies residues 1–19 (MLVFYAPLFVSIFSNTVMG). Residues 20 to 41 (ATIDKPIPKPILREAIEKIAVN) constitute a propeptide that is removed on maturation.

The protein belongs to the scoloptoxin-07 family. Contains 3 disulfide bonds. Expressed by the venom gland.

It is found in the secreted. In terms of biological role, inhibits voltage-gated potassium channels. The protein is Kappa-scoloptoxin(07)-Ssm2c of Scolopendra mutilans (Chinese red-headed centipede).